The following is a 40-amino-acid chain: Dolichyl-diphosphooligosaccharide--protein glycosyltransferase subunit 4 (40 aa).

Residues 1-4 (MITD) lie on the Lumenal side of the membrane. Residues 5–25 (VQLAIFSNVLGVFLFLLVVAY) form a helical membrane-spanning segment. The Cytoplasmic segment spans residues 26 to 40 (HYINANTGKSIIKSK).

The protein belongs to the OST4 family. As to quaternary structure, component of the oligosaccharyltransferase (OST) complex.

It localises to the endoplasmic reticulum membrane. Its function is as follows. Subunit of the oligosaccharyl transferase (OST) complex that catalyzes the initial transfer of a defined glycan (Glc(3)Man(9)GlcNAc(2) in eukaryotes) from the lipid carrier dolichol-pyrophosphate to an asparagine residue within an Asn-X-Ser/Thr consensus motif in nascent polypeptide chains, the first step in protein N-glycosylation. N-glycosylation occurs cotranslationally and the complex associates with the Sec61 complex at the channel-forming translocon complex that mediates protein translocation across the endoplasmic reticulum (ER). All subunits are required for a maximal enzyme activity. This Drosophila grimshawi (Hawaiian fruit fly) protein is Dolichyl-diphosphooligosaccharide--protein glycosyltransferase subunit 4.